A 359-amino-acid chain; its full sequence is Mannonate dehydratase (359 aa).

The protein belongs to the mannonate dehydratase family. Requires Fe(2+) as cofactor. Mn(2+) is required as a cofactor.

The enzyme catalyses D-mannonate = 2-dehydro-3-deoxy-D-gluconate + H2O. It participates in carbohydrate metabolism; pentose and glucuronate interconversion. Its function is as follows. Catalyzes the dehydration of D-mannonate. In Moorella thermoacetica (strain ATCC 39073 / JCM 9320), this protein is Mannonate dehydratase.